Consider the following 308-residue polypeptide: Cell division protein FtsX (308 aa).

The Extracellular portion of the chain corresponds to 1–24 (MISRFFRHLFEALKSLKRNGWMTV). A helical membrane pass occupies residues 25–45 (AAVSSVMITLTLVAIFASVIF). At 46 to 178 (NTAKLATDIE…NTERLFKLAS (133 aa)) the chain is on the cytoplasmic side. The helical transmembrane segment at 179-199 (FIRVWGLGIAALLIFIAAFLI) threads the bilayer. Residues 200-236 (SNTIRITIISRSREIQIMRLVGAKNSYIRGPFLLEGA) are Extracellular-facing. Residues 237–257 (FIGLLGAIAPSVLVFIVYQIV) form a helical membrane-spanning segment. Topologically, residues 258-276 (YQSVNKSLVGQNLSMISPD) are cytoplasmic. Residues 277 to 297 (LFSPLMIALLFVIGVFIGSLG) form a helical membrane-spanning segment. Topologically, residues 298-308 (SGISMRRFLKI) are extracellular.

Belongs to the ABC-4 integral membrane protein family. FtsX subfamily. Interacts with FtsE. Interacts (via large extracellular loop) with PcsB (via N-terminal coiled coil domain). This interaction directs PcsB to equatorial and septal sites of dividing cells.

The protein localises to the cell membrane. In terms of biological role, part of the ABC transporter FtsEX involved in asymmetric cellular division facilitating the initiation of sporulation. Required in maintaining normal growth and cellular morphology. This chain is Cell division protein FtsX, found in Streptococcus pneumoniae (strain ATCC BAA-255 / R6).